The chain runs to 178 residues: Large ribosomal subunit protein uL5 (178 aa).

A2 carries the N-acetylalanine modification. K38 is covalently cross-linked (Glycyl lysine isopeptide (Lys-Gly) (interchain with G-Cter in SUMO2)). 2 positions are modified to phosphothreonine: T44 and T47. Position 52 is an N6-acetyllysine; alternate (K52). K52 is covalently cross-linked (Glycyl lysine isopeptide (Lys-Gly) (interchain with G-Cter in SUMO2); alternate). Position 85 is an N6-acetyllysine (K85). K154 is covalently cross-linked (Glycyl lysine isopeptide (Lys-Gly) (interchain with G-Cter in SUMO2)).

Belongs to the universal ribosomal protein uL5 family. In terms of assembly, component of the large ribosomal subunit (LSU). Part of the 5S RNP complex, which is a LSU subcomplex composed of the 5S RNA, RPL5 and RPL11. Component of a hexameric 5S RNP precursor complex, composed of 5S RNA, RRS1, RPF2/BXDC1, RPL5, RPL11 and HEATR3; this complex acts as a precursor for ribosome assembly. Interacts with PML. Interacts with MDM2 (via its RanBP2-type zinc finger domain); negatively regulates MDM2-mediated TP53 ubiquitination and degradation. Interacts with NOP53; retains RPL11 into the nucleolus.

The protein resides in the nucleus. The protein localises to the nucleolus. It is found in the cytoplasm. Functionally, component of the ribosome, a large ribonucleoprotein complex responsible for the synthesis of proteins in the cell. The small ribosomal subunit (SSU) binds messenger RNAs (mRNAs) and translates the encoded message by selecting cognate aminoacyl-transfer RNA (tRNA) molecules. The large subunit (LSU) contains the ribosomal catalytic site termed the peptidyl transferase center (PTC), which catalyzes the formation of peptide bonds, thereby polymerizing the amino acids delivered by tRNAs into a polypeptide chain. The nascent polypeptides leave the ribosome through a tunnel in the LSU and interact with protein factors that function in enzymatic processing, targeting, and the membrane insertion of nascent chains at the exit of the ribosomal tunnel. As part of the 5S RNP/5S ribonucleoprotein particle it is an essential component of the LSU, required for its formation and the maturation of rRNAs. It also couples ribosome biogenesis to p53/TP53 activation. As part of the 5S RNP it accumulates in the nucleoplasm and inhibits MDM2, when ribosome biogenesis is perturbed, mediating the stabilization and the activation of TP53. Promotes nucleolar location of PML. The sequence is that of Large ribosomal subunit protein uL5 (RPL11) from Pongo abelii (Sumatran orangutan).